The chain runs to 1866 residues: RNA1 polyprotein (1866 aa).

An SF3 helicase domain is found at 462-633; the sequence is LKGINDLEQL…KAYDAANFAS (172 aa). Position 494–501 (494–501) interacts with ATP; sequence GKSRTGKS. Residues 897-917 traverse the membrane as a helical segment; sequence LVGSGNGPVLMGVAAGAFSAE. Ser-920 bears the O-(5'-phospho-RNA)-serine mark. Residues 945–1150 form the Peptidase C3 domain; the sequence is DAQMSLDQSS…CASLLPPLEP (206 aa). Active-site for picornain 3C-like protease activity residues include His-987, Glu-1023, and Cys-1113. The region spanning 1429–1559 is the RdRp catalytic domain; it reads NDVLCCDYSS…SVNAVVTPYF (131 aa).

Specific enzymatic cleavages by picornain 3C-like protease in vivo yield mature proteins. Picornain 3C-like protease is autocatalytically processed. Post-translationally, uridylylated by the polymerase and is covalently linked to the 5'-end of genomic RNA. This uridylylated form acts as a nucleotide-peptide primer for the polymerase.

The protein resides in the host membrane. The protein localises to the host cytoplasm. Its subcellular location is the host perinuclear region. It is found in the host endoplasmic reticulum. The enzyme catalyses RNA(n) + a ribonucleoside 5'-triphosphate = RNA(n+1) + diphosphate. Thiol protease that cleaves the RNA1 and RNA2 polyproteins. Functionally, plays a role in RNA replication. It is covalently linked to the 5'terminus of both viral single-stranded RNA1 and RNA2 molecules. Its function is as follows. Down-regulates the RNA1 polyprotein processing and enhances trans-cleavage of RNA2 polyproteins. The protease cofactor and the putative helicase seem to target the replication complexes to ER membranes. Their physical association causes the membrane rearrangement of host ER that may result in formation of the small membranous vesicles that are the site of viral RNA synthesis. In terms of biological role, the protease cofactor and the putative helicase seem to target the replication complexes to ER membranes. Their physical association causes the membrane rearrangement of host ER that may result in formation of the small membranous vesicles that are the site of viral RNA synthesis. Replicates the viral genome. The chain is RNA1 polyprotein from Cajanus cajan (Pigeon pea).